The sequence spans 95 residues: MARKRTLGGKAPQAGNKVSHSQRKTRRQWMPNIQTKALWSITLGQSVKVTISTSALRSVDNAGGLDNYLLKILPSELTPSMRRVARQIRERKAAA.

Positions 1–28 are disordered; it reads MARKRTLGGKAPQAGNKVSHSQRKTRRQ.

Belongs to the bacterial ribosomal protein bL28 family.

The sequence is that of Large ribosomal subunit protein bL28 from Magnetococcus marinus (strain ATCC BAA-1437 / JCM 17883 / MC-1).